The primary structure comprises 128 residues: Large ribosomal subunit protein mL55 (128 aa).

Residues 1–33 constitute a mitochondrion transit peptide; the sequence is MAAVGSLLGRLRQSTVKATGPALRRLHTSSWRA. Ser-85 carries the phosphoserine modification.

It belongs to the mitochondrion-specific ribosomal protein mL55 family. In terms of assembly, component of the mitochondrial large ribosomal subunit (mt-LSU). Mature mammalian 55S mitochondrial ribosomes consist of a small (28S) and a large (39S) subunit. The 28S small subunit contains a 12S ribosomal RNA (12S mt-rRNA) and 30 different proteins. The 39S large subunit contains a 16S rRNA (16S mt-rRNA), a copy of mitochondrial valine transfer RNA (mt-tRNA(Val)), which plays an integral structural role, and 52 different proteins.

The protein resides in the mitochondrion. This Homo sapiens (Human) protein is Large ribosomal subunit protein mL55 (MRPL55).